A 147-amino-acid polypeptide reads, in one-letter code: TRAF-interacting protein with FHA domain-containing protein B (147 aa).

The 73-residue stretch at 36–108 (LLVGRGQNTH…LGTINRISFS (73 aa)) folds into the FHA domain.

As to quaternary structure, interacts with TIFA. As to expression, expressed at high levels in spleen and at moderate levels in lung, thymus, and small intestine.

Inhibits TIFA-mediated TRAF6 activation possibly by inducing a conformational change in TIFA. This chain is TRAF-interacting protein with FHA domain-containing protein B, found in Mus musculus (Mouse).